The primary structure comprises 1203 residues: Cation-transporting ATPase catp-5 (1203 aa).

At 1–68 (MNTSEREPLL…YAYKETIGRQ (68 aa)) the chain is on the cytoplasmic side. Residues 21 to 42 (TTDNPSTKIMKREKDNPKAKTT) form a disordered region. The chain crosses the membrane as a helical span at residues 69 to 89 (ILFWLLTIVTLGFYQLLAYWV). Residues 90–209 (KSLFVKVRFQ…RKIYNMNALA (120 aa)) are Extracellular-facing. Residues 210–230 (LALTPILVILFKEVLGPFYLF) traverse the membrane as a helical segment. The Cytoplasmic portion of the chain corresponds to 231 to 242 (QCFSVALWYSDN). A helical membrane pass occupies residues 243-263 (YAYYASVIVIITVGSAAVAVY). At 264-297 (QMRAQEKRIRNMVGDTISVIVRRDGHDITIDASE) the chain is on the extracellular side. Residues 298 to 318 (IVPMDILILPSNTFILPCDCL) traverse the membrane as a helical segment. At 319–414 (LMNGTVIVNE…KPQEKEALKD (96 aa)) the chain is on the cytoplasmic side. A helical transmembrane segment spans residues 415-435 (VMVFILVLGFIALIGFIYTVI). The Extracellular portion of the chain corresponds to 436–451 (EMVSRGESLKHIIIRS). Residues 452–472 (LDIITIVVPPALPAAMSVGII) traverse the membrane as a helical segment. At 473 to 935 (NANSRLKKKK…KEGRCALVTS (463 aa)) the chain is on the cytoplasmic side. Residue Asp503 is the 4-aspartylphosphate intermediate of the active site. The disordered stretch occupies residues 595–617 (ETQDFDTVQPTVLRPPPEQATYH). The Mg(2+) site is built by Asp883 and Asp887. A helical transmembrane segment spans residues 936-956 (YAVSKYMAAYSLNEFLSVMLL). The Extracellular portion of the chain corresponds to 957 to 962 (YNDGTN). The helical transmembrane segment at 963–983 (ISDGQFLYIDLVLITLVALFL) threads the bilayer. Residues 984 to 1007 (GNTEASRKLSGIPPPRRLATSAFY) are Cytoplasmic-facing. The helical transmembrane segment at 1008–1028 (FSVFGQMFFNIITQTTGYLLV) threads the bilayer. Over 1029–1046 (RGQSWYVPNPEELDNTTT) the chain is Extracellular. A helical transmembrane segment spans residues 1047-1067 (MIGTTVFFTSCCMYLGYAFVY). The Cytoplasmic segment spans residues 1068–1085 (SKGHPYRRSVFTNWLLCG). Residues 1086–1106 (IIFVIGAINMVMIFTNMGFLM) traverse the membrane as a helical segment. The Extracellular portion of the chain corresponds to 1107-1120 (NLMGFVYVPSTSMR). Residues 1121-1141 (FILLAISLAGVFLSLLYEHFF) form a helical membrane-spanning segment. The Cytoplasmic portion of the chain corresponds to 1142–1203 (VEKVVAIHFE…DRKETIESKC (62 aa)).

This sequence belongs to the cation transport ATPase (P-type) (TC 3.A.3) family. Type V subfamily. As to expression, expressed in the 20 intestinal cells and in the excretory cell.

The protein resides in the apical cell membrane. It catalyses the reaction ATP + H2O = ADP + phosphate + H(+). Functionally, involved in the uptake and/or transport of polyamines, probably through ATP hydrolysis. This contributes to the maintenance of intracellular polyamine levels. Polyamines are essential for cell proliferation and are implicated in cellular processes, ranging from DNA replication to apoptosis. The sequence is that of Cation-transporting ATPase catp-5 from Caenorhabditis elegans.